An 88-amino-acid chain; its full sequence is Small ribosomal subunit protein bS16 (88 aa).

The protein belongs to the bacterial ribosomal protein bS16 family.

The polypeptide is Small ribosomal subunit protein bS16 (Mycoplasma pneumoniae (strain ATCC 29342 / M129 / Subtype 1) (Mycoplasmoides pneumoniae)).